Consider the following 467-residue polypeptide: tRNA dimethylallyltransferase (467 aa).

The N-terminal 47 residues, 1 to 47 (MAAAAAARAVPVSSGFRGLRRTLPLVVILGATGTGKSTLALQLGQRL), are a transit peptide targeting the mitochondrion. Residue 32-37 (TGTGKS) participates in dimethylallyl diphosphate binding. Interaction with substrate tRNA regions lie at residues 55-58 (DSMQ) and 183-187 (RKVAR). Residues 221–230 (FPNPCILWLH) are core aggregation region. Residues 233–255 (QAVLDERLDKRVDDMLAAGLLEE) form an interaction with isopentenylpyrophosphate transferase region. 2 interaction with substrate tRNA regions span residues 281–283 (QSI) and 313–331 (ALKQ…WVKN). Residues 395 to 425 (HMCDLCDRIIIGDREWAAHLKSKSHLHQLKK) form a Matrin-type zinc finger. A disordered region spans residues 432 to 467 (DAVSATGSQSNSPDCDPERIEGESSGQHNQELKASV). A phosphoserine mark is found at S443 and S455.

Belongs to the IPP transferase family.

It is found in the mitochondrion. It localises to the cytoplasm. The protein localises to the nucleus. The enzyme catalyses adenosine(37) in tRNA + dimethylallyl diphosphate = N(6)-dimethylallyladenosine(37) in tRNA + diphosphate. Functionally, catalyzes the transfer of a dimethylallyl group onto the adenine at position 37 of both cytosolic and mitochondrial tRNAs, leading to the formation of N6-(dimethylallyl)adenosine (i6A37). Mediates modification of a limited subset of tRNAs: tRNA(Ser)(AGA), tRNA(Ser)(CGA), tRNA(Ser)(UGA), as well as partial modification of the selenocysteine tRNA(Ser)(UCA). TRIT1 is therefore required for selenoprotein expression. The polypeptide is tRNA dimethylallyltransferase (Trit1) (Mus musculus (Mouse)).